Consider the following 339-residue polypeptide: Isopentenyl-diphosphate delta-isomerase (339 aa).

7 to 8 (RK) provides a ligand contact to substrate. Residues Ser-65, 66–68 (SMT), Ser-96, and Asn-125 each bind FMN. 96–98 (SQR) provides a ligand contact to substrate. Gln-160 lines the substrate pocket. Position 161 (Glu-161) interacts with Mg(2+). Residues Lys-192, Thr-222, and 293–294 (AG) contribute to the FMN site.

This sequence belongs to the IPP isomerase type 2 family. Homooctamer. Dimer of tetramers. Requires FMN as cofactor. The cofactor is NADPH. It depends on Mg(2+) as a cofactor.

The protein localises to the cytoplasm. The enzyme catalyses isopentenyl diphosphate = dimethylallyl diphosphate. Its function is as follows. Involved in the biosynthesis of isoprenoids. Catalyzes the 1,3-allylic rearrangement of the homoallylic substrate isopentenyl (IPP) to its allylic isomer, dimethylallyl diphosphate (DMAPP). This is Isopentenyl-diphosphate delta-isomerase from Vibrio parahaemolyticus serotype O3:K6 (strain RIMD 2210633).